The chain runs to 352 residues: C-C chemokine receptor type 5 (352 aa).

Over 1–30 (MDYQVSSPTYDIDYYTSEPCQKINVKQIAG) the chain is Extracellular. Position 3 is a sulfotyrosine (Y3). Residues S6 and S7 are each glycosylated (O-linked (GalNAc...) serine). Sulfotyrosine occurs at positions 10, 14, and 15. 2 disulfide bridges follow: C20-C269 and C101-C178. The chain crosses the membrane as a helical span at residues 31 to 58 (RLLPPLYSLVFIFGFVGNILVVLILINC). The Cytoplasmic portion of the chain corresponds to 59–68 (KRLKSMTDIY). Residues 69–89 (LLNLAISDLLFLLTVPFWAHY) form a helical membrane-spanning segment. The Extracellular segment spans residues 90–102 (AAAQWDFGNTMCQ). A helical membrane pass occupies residues 103 to 124 (LLTGLYFIGFFSGIFFIILLTI). The Cytoplasmic segment spans residues 125-141 (DRYLAIVHAVFALKART). Residues 142-166 (VTFGVVTSVITWVVAVFASLPGIIF) traverse the membrane as a helical segment. Residues 167-198 (TRSQREGLHYTCSSHFPYSQYQFWKNFQTLKI) are Extracellular-facing. Residues 199–218 (VILGLVLPLLVMVICYSGIL) form a helical membrane-spanning segment. Residues 219-235 (KTLLRCRNEKKRHRAVR) are Cytoplasmic-facing. A helical membrane pass occupies residues 236–260 (LIFTIMIVYFLFWAPYNIVLLLNTF). At 261 to 277 (QEFFGLNNCSSSNRLDQ) the chain is on the extracellular side. A helical membrane pass occupies residues 278–301 (AMQVTETLGMTHCCINPIIYAFVG). Residues 302 to 352 (EKFRNYLLVFFQKHIAKRFCKCCSIFQQEAPERASSVYTRSTGEQEISVGL) lie on the Cytoplasmic side of the membrane. S-palmitoyl cysteine attachment occurs at residues C321, C323, and C324. Residues S336, S337, S342, and S349 each carry the phosphoserine; by BARK1 modification.

The protein belongs to the G-protein coupled receptor 1 family. In terms of assembly, interacts with PRAF2. Efficient ligand binding to CCL3/MIP-1alpha and CCL4/MIP-1beta requires sulfation, O-glycosylation and sialic acid modifications. Glycosylation on Ser-6 is required for efficient binding of CCL4. Interacts with GRK2. Interacts with ARRB1 and ARRB2. Interacts with CNIH4. Interacts with S100A4; this interaction stimulates T-lymphocyte chemotaxis. Post-translationally, sulfated on at least 2 of the N-terminal tyrosines. Sulfation is required for efficient binding of the chemokines, CCL3 and CCL4. In terms of processing, palmitoylation in the C-terminal is important for cell surface expression. Phosphorylation on serine residues in the C-terminal is stimulated by binding CC chemokines especially by APO-RANTES. Post-translationally, O-glycosylated, but not N-glycosylated. Ser-6 appears to be the major site even if Ser-7 may be also O-glycosylated. Also sialylated glycans present which contribute to chemokine binding. Thr-16 and Ser-17 may also be glycosylated and, if so, with small moieties such as a T-antigen.

It localises to the cell membrane. Its function is as follows. Receptor for a number of inflammatory CC-chemokines including CCL3/MIP-1-alpha, CCL4/MIP-1-beta and RANTES and subsequently transduces a signal by increasing the intracellular calcium ion level. May play a role in the control of granulocytic lineage proliferation or differentiation. Participates in T-lymphocyte migration to the infection site by acting as a chemotactic receptor. In Theropithecus gelada (Gelada baboon), this protein is C-C chemokine receptor type 5 (CCR5).